The chain runs to 544 residues: Light-independent protochlorophyllide reductase subunit B (544 aa).

Residue aspartate 36 coordinates [4Fe-4S] cluster. Aspartate 286 acts as the Proton donor in catalysis. Substrate is bound at residue 421–422 (GM).

The protein belongs to the ChlB/BchB/BchZ family. In terms of assembly, protochlorophyllide reductase is composed of three subunits; BchL, BchN and BchB. Forms a heterotetramer of two BchB and two BchN subunits. [4Fe-4S] cluster serves as cofactor.

The catalysed reaction is chlorophyllide a + oxidized 2[4Fe-4S]-[ferredoxin] + 2 ADP + 2 phosphate = protochlorophyllide a + reduced 2[4Fe-4S]-[ferredoxin] + 2 ATP + 2 H2O. It participates in porphyrin-containing compound metabolism; bacteriochlorophyll biosynthesis (light-independent). Component of the dark-operative protochlorophyllide reductase (DPOR) that uses Mg-ATP and reduced ferredoxin to reduce ring D of protochlorophyllide (Pchlide) to form chlorophyllide a (Chlide). This reaction is light-independent. The NB-protein (BchN-BchB) is the catalytic component of the complex. In Chloroflexus aggregans (strain MD-66 / DSM 9485), this protein is Light-independent protochlorophyllide reductase subunit B.